We begin with the raw amino-acid sequence, 267 residues long: Formamidopyrimidine-DNA glycosylase (267 aa).

Catalysis depends on Pro-2, which acts as the Schiff-base intermediate with DNA. The active-site Proton donor is the Glu-3. Residue Lys-58 is the Proton donor; for beta-elimination activity of the active site. DNA is bound by residues His-91, Arg-110, and Arg-152. The FPG-type zinc finger occupies 233 to 267 (DVYGRGHGTCTSCGGALEAVRLGNRSTVFCPRCQQ). Arg-257 functions as the Proton donor; for delta-elimination activity in the catalytic mechanism.

Belongs to the FPG family. As to quaternary structure, monomer. The cofactor is Zn(2+).

It carries out the reaction Hydrolysis of DNA containing ring-opened 7-methylguanine residues, releasing 2,6-diamino-4-hydroxy-5-(N-methyl)formamidopyrimidine.. It catalyses the reaction 2'-deoxyribonucleotide-(2'-deoxyribose 5'-phosphate)-2'-deoxyribonucleotide-DNA = a 3'-end 2'-deoxyribonucleotide-(2,3-dehydro-2,3-deoxyribose 5'-phosphate)-DNA + a 5'-end 5'-phospho-2'-deoxyribonucleoside-DNA + H(+). Its function is as follows. Involved in base excision repair of DNA damaged by oxidation or by mutagenic agents. Acts as a DNA glycosylase that recognizes and removes damaged bases. Has a preference for oxidized purines, such as 7,8-dihydro-8-oxoguanine (8-oxoG). Has AP (apurinic/apyrimidinic) lyase activity and introduces nicks in the DNA strand. Cleaves the DNA backbone by beta-delta elimination to generate a single-strand break at the site of the removed base with both 3'- and 5'-phosphates. This is Formamidopyrimidine-DNA glycosylase from Pelobacter propionicus (strain DSM 2379 / NBRC 103807 / OttBd1).